A 430-amino-acid chain; its full sequence is MNFVEELRWRGMIADMMPGTEEQLQKELTSAYVGIDPTADSLHIGHLVSVMMLKHFQRAGHRPIALVGGATGMIGDPSMKSAERNLLDEATLRHNQDCIKKQLAKFLDFDSDAPNAAKLVNNYDWMKGYSFLNFIRDIGKHITVNYMMAKDSVKKRLSRESSVGMSFTEFSYQLLQGYDYLYLYEHEGCRLQMGGTDQWGNITTGTELIRRTLGGEAYALTCPLITKADGGKFGKTESGNIWLDRRYTSPYKFYQFWLNVSDADAAKYIKIFTDLSQEEIAALEAEQEAAPHLRPLQKRLAKEVTVMVHSLEDYEAAVEASNILFGNSTHEALLKLDEDTLLAVFEGVPHFDISRDELAAGIKAVDLCTEKAAIFPSKGEMRKLVQSGGVSFNKEKLAEVDTVIDCSSLLDDKYLLVQRGKKNYYLLIAK.

Y32 serves as a coordination point for L-tyrosine. A 'HIGH' region motif is present at residues P37 to H46. L-tyrosine-binding residues include Y172 and Q176. A 'KMSKS' region motif is present at residues K232–T236. K235 contributes to the ATP binding site. Residues I362 to A429 enclose the S4 RNA-binding domain.

This sequence belongs to the class-I aminoacyl-tRNA synthetase family. TyrS type 1 subfamily. Homodimer.

Its subcellular location is the cytoplasm. It carries out the reaction tRNA(Tyr) + L-tyrosine + ATP = L-tyrosyl-tRNA(Tyr) + AMP + diphosphate + H(+). Its function is as follows. Catalyzes the attachment of tyrosine to tRNA(Tyr) in a two-step reaction: tyrosine is first activated by ATP to form Tyr-AMP and then transferred to the acceptor end of tRNA(Tyr). The chain is Tyrosine--tRNA ligase from Parabacteroides distasonis (strain ATCC 8503 / DSM 20701 / CIP 104284 / JCM 5825 / NCTC 11152).